The following is a 165-amino-acid chain: Ubiquitin-fold modifier-conjugating enzyme 1 (165 aa).

C117 serves as the catalytic Glycyl thioester intermediate.

This sequence belongs to the ubiquitin-conjugating enzyme family. UFC1 subfamily.

Its function is as follows. E2-like enzyme which forms an intermediate with UFM1 via a thioester linkage. This Brugia malayi (Filarial nematode worm) protein is Ubiquitin-fold modifier-conjugating enzyme 1.